The following is a 288-amino-acid chain: ATP synthase gamma chain (288 aa).

The protein belongs to the ATPase gamma chain family. F-type ATPases have 2 components, CF(1) - the catalytic core - and CF(0) - the membrane proton channel. CF(1) has five subunits: alpha(3), beta(3), gamma(1), delta(1), epsilon(1). CF(0) has three main subunits: a, b and c.

The protein resides in the cell membrane. Functionally, produces ATP from ADP in the presence of a proton gradient across the membrane. The gamma chain is believed to be important in regulating ATPase activity and the flow of protons through the CF(0) complex. This is ATP synthase gamma chain from Staphylococcus aureus (strain Mu3 / ATCC 700698).